We begin with the raw amino-acid sequence, 473 residues long: Hyaluronidase-2 (473 aa).

Residues M1 to A20 form the signal peptide. 2 disulfide bridges follow: C47-C340 and C211-C227. N-linked (GlcNAc...) asparagine glycans are attached at residues N74 and N103. Catalysis depends on E135, which acts as the Proton donor. N357 is a glycosylation site (N-linked (GlcNAc...) asparagine). An EGF-like domain is found at A361–Q439. Disulfide bonds link C365–C376, C370–C427, and C429–C438. An N-linked (GlcNAc...) asparagine glycan is attached at N390. N448 carries GPI-anchor amidated asparagine; alternate lipidation. N-linked (GlcNAc...) asparagine; alternate glycosylation occurs at N448. Positions A449 to L473 are cleaved as a propeptide — removed in mature form.

It belongs to the glycosyl hydrolase 56 family. In terms of assembly, interacts with MST1R. As to expression, widely expressed, with highest expression levels in kidney, lung and liver (at protein level).

It is found in the cell membrane. The catalysed reaction is Random hydrolysis of (1-&gt;4)-linkages between N-acetyl-beta-D-glucosamine and D-glucuronate residues in hyaluronate.. In terms of biological role, catalyzes hyaluronan degradation into small fragments that are endocytosed and degraded in lysosomes by HYAL1 and exoglycosidases. Essential for the breakdown of extracellular matrix hyaluronan. This chain is Hyaluronidase-2 (Hyal2), found in Mus musculus (Mouse).